Reading from the N-terminus, the 539-residue chain is CTP synthase (539 aa).

Residues 1-267 form an amidoligase domain region; it reads MTKYIFVTGG…DQKVCDFLHI (267 aa). Serine 13 provides a ligand contact to CTP. Serine 13 is a UTP binding site. 14 to 19 contributes to the ATP binding site; sequence SLGKGI. Tyrosine 54 serves as a coordination point for L-glutamine. Aspartate 71 serves as a coordination point for ATP. Mg(2+)-binding residues include aspartate 71 and glutamate 141. CTP-binding positions include 148 to 150, 188 to 193, and lysine 224; these read DME and KTKPTQ. Residues 188–193 and lysine 224 contribute to the UTP site; that span reads KTKPTQ. In terms of domain architecture, Glutamine amidotransferase type-1 spans 294–537; sequence KITLVGKYVE…IGAASGLPEQ (244 aa). An L-glutamine-binding site is contributed by glycine 356. Residue cysteine 383 is the Nucleophile; for glutamine hydrolysis of the active site. L-glutamine is bound by residues 384 to 387, glutamate 407, and arginine 465; that span reads LGMQ. Residues histidine 510 and glutamate 512 contribute to the active site.

It belongs to the CTP synthase family. As to quaternary structure, homotetramer.

It carries out the reaction UTP + L-glutamine + ATP + H2O = CTP + L-glutamate + ADP + phosphate + 2 H(+). The enzyme catalyses L-glutamine + H2O = L-glutamate + NH4(+). The catalysed reaction is UTP + NH4(+) + ATP = CTP + ADP + phosphate + 2 H(+). The protein operates within pyrimidine metabolism; CTP biosynthesis via de novo pathway; CTP from UDP: step 2/2. With respect to regulation, allosterically activated by GTP, when glutamine is the substrate; GTP has no effect on the reaction when ammonia is the substrate. The allosteric effector GTP functions by stabilizing the protein conformation that binds the tetrahedral intermediate(s) formed during glutamine hydrolysis. Inhibited by the product CTP, via allosteric rather than competitive inhibition. Its function is as follows. Catalyzes the ATP-dependent amination of UTP to CTP with either L-glutamine or ammonia as the source of nitrogen. Regulates intracellular CTP levels through interactions with the four ribonucleotide triphosphates. The protein is CTP synthase of Lactobacillus helveticus (strain DPC 4571).